Here is a 279-residue protein sequence, read N- to C-terminus: 1D-myo-inositol 2-acetamido-2-deoxy-alpha-D-glucopyranoside deacetylase (279 aa).

3 residues coordinate Zn(2+): His-12, Asp-15, and His-146.

It belongs to the MshB deacetylase family. The cofactor is Zn(2+).

The enzyme catalyses 1D-myo-inositol 2-acetamido-2-deoxy-alpha-D-glucopyranoside + H2O = 1D-myo-inositol 2-amino-2-deoxy-alpha-D-glucopyranoside + acetate. Functionally, catalyzes the deacetylation of 1D-myo-inositol 2-acetamido-2-deoxy-alpha-D-glucopyranoside (GlcNAc-Ins) in the mycothiol biosynthesis pathway. In Mycobacteroides abscessus (strain ATCC 19977 / DSM 44196 / CCUG 20993 / CIP 104536 / JCM 13569 / NCTC 13031 / TMC 1543 / L948) (Mycobacterium abscessus), this protein is 1D-myo-inositol 2-acetamido-2-deoxy-alpha-D-glucopyranoside deacetylase.